Here is a 196-residue protein sequence, read N- to C-terminus: Pyridoxal 5'-phosphate synthase subunit PdxT (196 aa).

46-48 (GES) lines the L-glutamine pocket. Cys-78 functions as the Nucleophile in the catalytic mechanism. L-glutamine-binding positions include Arg-105 and 133-134 (IR). Active-site charge relay system residues include His-169 and Glu-171.

The protein belongs to the glutaminase PdxT/SNO family. As to quaternary structure, in the presence of PdxS, forms a dodecamer of heterodimers. Only shows activity in the heterodimer.

It carries out the reaction aldehydo-D-ribose 5-phosphate + D-glyceraldehyde 3-phosphate + L-glutamine = pyridoxal 5'-phosphate + L-glutamate + phosphate + 3 H2O + H(+). It catalyses the reaction L-glutamine + H2O = L-glutamate + NH4(+). It functions in the pathway cofactor biosynthesis; pyridoxal 5'-phosphate biosynthesis. Its function is as follows. Catalyzes the hydrolysis of glutamine to glutamate and ammonia as part of the biosynthesis of pyridoxal 5'-phosphate. The resulting ammonia molecule is channeled to the active site of PdxS. This chain is Pyridoxal 5'-phosphate synthase subunit PdxT, found in Geobacillus kaustophilus (strain HTA426).